We begin with the raw amino-acid sequence, 137 residues long: Small ribosomal subunit protein uS12 (137 aa).

Residues 1–57 (MPTINQLVRKPRKSKVEKSKSPALNVGYNSHKKVQTNVSSPQKRGVATRVGTMTPKK) are disordered. Asp102 is modified (3-methylthioaspartic acid).

It belongs to the universal ribosomal protein uS12 family. Part of the 30S ribosomal subunit. Contacts proteins S8 and S17. May interact with IF1 in the 30S initiation complex.

In terms of biological role, with S4 and S5 plays an important role in translational accuracy. Its function is as follows. Interacts with and stabilizes bases of the 16S rRNA that are involved in tRNA selection in the A site and with the mRNA backbone. Located at the interface of the 30S and 50S subunits, it traverses the body of the 30S subunit contacting proteins on the other side and probably holding the rRNA structure together. The combined cluster of proteins S8, S12 and S17 appears to hold together the shoulder and platform of the 30S subunit. The protein is Small ribosomal subunit protein uS12 of Streptococcus sanguinis (strain SK36).